The chain runs to 208 residues: ATP-dependent Clp protease proteolytic subunit (208 aa).

Serine 107 acts as the Nucleophile in catalysis. The active site involves histidine 132.

The protein belongs to the peptidase S14 family. Fourteen ClpP subunits assemble into 2 heptameric rings which stack back to back to give a disk-like structure with a central cavity, resembling the structure of eukaryotic proteasomes.

The protein localises to the cytoplasm. It catalyses the reaction Hydrolysis of proteins to small peptides in the presence of ATP and magnesium. alpha-casein is the usual test substrate. In the absence of ATP, only oligopeptides shorter than five residues are hydrolyzed (such as succinyl-Leu-Tyr-|-NHMec, and Leu-Tyr-Leu-|-Tyr-Trp, in which cleavage of the -Tyr-|-Leu- and -Tyr-|-Trp bonds also occurs).. Its function is as follows. Cleaves peptides in various proteins in a process that requires ATP hydrolysis. Has a chymotrypsin-like activity. Plays a major role in the degradation of misfolded proteins. The sequence is that of ATP-dependent Clp protease proteolytic subunit from Methylorubrum populi (strain ATCC BAA-705 / NCIMB 13946 / BJ001) (Methylobacterium populi).